We begin with the raw amino-acid sequence, 177 residues long: Endoribonuclease YbeY (177 aa).

His-118, His-122, and His-128 together coordinate Zn(2+).

It belongs to the endoribonuclease YbeY family. Zn(2+) serves as cofactor.

Its subcellular location is the cytoplasm. In terms of biological role, single strand-specific metallo-endoribonuclease involved in late-stage 70S ribosome quality control and in maturation of the 3' terminus of the 16S rRNA. This chain is Endoribonuclease YbeY, found in Mycobacterium sp. (strain JLS).